Here is a 426-residue protein sequence, read N- to C-terminus: Formate-dependent phosphoribosylglycinamide formyltransferase (426 aa).

N(1)-(5-phospho-beta-D-ribosyl)glycinamide contacts are provided by residues 26-27 and E86; that span reads EL. ATP is bound by residues R118, K158, 197–200, and E205; that span reads EEFI. In terms of domain architecture, ATP-grasp spans 123–324; sequence EAIASTGART…EFALHAKAVL (202 aa). The Mg(2+) site is built by E279 and E293. N(1)-(5-phospho-beta-D-ribosyl)glycinamide is bound by residues D300, K374, and 381–382; that span reads RR.

This sequence belongs to the PurK/PurT family. In terms of assembly, homodimer.

It carries out the reaction N(1)-(5-phospho-beta-D-ribosyl)glycinamide + formate + ATP = N(2)-formyl-N(1)-(5-phospho-beta-D-ribosyl)glycinamide + ADP + phosphate + H(+). It functions in the pathway purine metabolism; IMP biosynthesis via de novo pathway; N(2)-formyl-N(1)-(5-phospho-D-ribosyl)glycinamide from N(1)-(5-phospho-D-ribosyl)glycinamide (formate route): step 1/1. Its function is as follows. Involved in the de novo purine biosynthesis. Catalyzes the transfer of formate to 5-phospho-ribosyl-glycinamide (GAR), producing 5-phospho-ribosyl-N-formylglycinamide (FGAR). Formate is provided by PurU via hydrolysis of 10-formyl-tetrahydrofolate. This Methanocella arvoryzae (strain DSM 22066 / NBRC 105507 / MRE50) protein is Formate-dependent phosphoribosylglycinamide formyltransferase.